The following is a 290-amino-acid chain: Small ribosomal subunit protein uS11 (290 aa).

Residues Asp-243–Ala-271 are disordered. The span at Trp-257–Ala-271 shows a compositional bias: low complexity.

This sequence belongs to the universal ribosomal protein uS2 family. As to quaternary structure, component of the small ribosomal subunit (SSU). Mature N.crassa ribosomes consist of a small (40S) and a large (60S) subunit. The 40S small subunit contains 1 molecule of ribosomal RNA (18S rRNA) and at least 32 different proteins. The large 60S subunit contains 3 rRNA molecules (26S, 5.8S and 5S rRNA) and at least 42 different proteins. Interacts with rps21.

It localises to the cytoplasm. Component of the ribosome, a large ribonucleoprotein complex responsible for the synthesis of proteins in the cell. The small ribosomal subunit (SSU) binds messenger RNAs (mRNAs) and translates the encoded message by selecting cognate aminoacyl-transfer RNA (tRNA) molecules. The large subunit (LSU) contains the ribosomal catalytic site termed the peptidyl transferase center (PTC), which catalyzes the formation of peptide bonds, thereby polymerizing the amino acids delivered by tRNAs into a polypeptide chain. The nascent polypeptides leave the ribosome through a tunnel in the LSU and interact with protein factors that function in enzymatic processing, targeting, and the membrane insertion of nascent chains at the exit of the ribosomal tunnel. uS2 is required for the assembly and/or stability of the 40S ribosomal subunit. Required for the processing of the 20S rRNA-precursor to mature 18S rRNA in a late step of the maturation of 40S ribosomal subunits. In Neurospora crassa (strain ATCC 24698 / 74-OR23-1A / CBS 708.71 / DSM 1257 / FGSC 987), this protein is Small ribosomal subunit protein uS11.